A 280-amino-acid chain; its full sequence is Urease accessory protein UreD 1 (280 aa).

It belongs to the UreD family. UreD, UreF and UreG form a complex that acts as a GTP-hydrolysis-dependent molecular chaperone, activating the urease apoprotein by helping to assemble the nickel containing metallocenter of UreC. The UreE protein probably delivers the nickel.

The protein localises to the cytoplasm. Its function is as follows. Required for maturation of urease via the functional incorporation of the urease nickel metallocenter. This is Urease accessory protein UreD 1 from Brucella abortus biovar 1 (strain 9-941).